Here is a 328-residue protein sequence, read N- to C-terminus: RNA 3'-terminal phosphate cyclase (328 aa).

ATP contacts are provided by residues Q100 and 276–280; that span reads HLADQ. Residue H302 is the Tele-AMP-histidine intermediate of the active site.

It belongs to the RNA 3'-terminal cyclase family. Type 1 subfamily.

Its subcellular location is the cytoplasm. It catalyses the reaction a 3'-end 3'-phospho-ribonucleotide-RNA + ATP = a 3'-end 2',3'-cyclophospho-ribonucleotide-RNA + AMP + diphosphate. Functionally, catalyzes the conversion of 3'-phosphate to a 2',3'-cyclic phosphodiester at the end of RNA. The mechanism of action of the enzyme occurs in 3 steps: (A) adenylation of the enzyme by ATP; (B) transfer of adenylate to an RNA-N3'P to produce RNA-N3'PP5'A; (C) and attack of the adjacent 2'-hydroxyl on the 3'-phosphorus in the diester linkage to produce the cyclic end product. The biological role of this enzyme is unknown but it is likely to function in some aspects of cellular RNA processing. In Archaeoglobus fulgidus (strain ATCC 49558 / DSM 4304 / JCM 9628 / NBRC 100126 / VC-16), this protein is RNA 3'-terminal phosphate cyclase (rtcA).